The chain runs to 361 residues: Phosphoserine aminotransferase (361 aa).

Arginine 42 is a binding site for L-glutamate. Pyridoxal 5'-phosphate-binding positions include 76–77 (AT), tryptophan 102, threonine 152, aspartate 172, and glutamine 195. Lysine 196 is modified (N6-(pyridoxal phosphate)lysine). Residue 237–238 (NT) coordinates pyridoxal 5'-phosphate.

It belongs to the class-V pyridoxal-phosphate-dependent aminotransferase family. SerC subfamily. Homodimer. It depends on pyridoxal 5'-phosphate as a cofactor.

The protein localises to the cytoplasm. It catalyses the reaction O-phospho-L-serine + 2-oxoglutarate = 3-phosphooxypyruvate + L-glutamate. The catalysed reaction is 4-(phosphooxy)-L-threonine + 2-oxoglutarate = (R)-3-hydroxy-2-oxo-4-phosphooxybutanoate + L-glutamate. It functions in the pathway amino-acid biosynthesis; L-serine biosynthesis; L-serine from 3-phospho-D-glycerate: step 2/3. The protein operates within cofactor biosynthesis; pyridoxine 5'-phosphate biosynthesis; pyridoxine 5'-phosphate from D-erythrose 4-phosphate: step 3/5. Its function is as follows. Catalyzes the reversible conversion of 3-phosphohydroxypyruvate to phosphoserine and of 3-hydroxy-2-oxo-4-phosphonooxybutanoate to phosphohydroxythreonine. This is Phosphoserine aminotransferase from Xanthomonas campestris pv. campestris (strain B100).